Consider the following 461-residue polypeptide: ATP synthase subunit beta (461 aa).

Gly151 to Thr158 is an ATP binding site.

This sequence belongs to the ATPase alpha/beta chains family. In terms of assembly, F-type ATPases have 2 components, CF(1) - the catalytic core - and CF(0) - the membrane proton channel. CF(1) has five subunits: alpha(3), beta(3), gamma(1), delta(1), epsilon(1). CF(0) has three main subunits: a(1), b(2) and c(9-12). The alpha and beta chains form an alternating ring which encloses part of the gamma chain. CF(1) is attached to CF(0) by a central stalk formed by the gamma and epsilon chains, while a peripheral stalk is formed by the delta and b chains.

The protein resides in the cell inner membrane. It carries out the reaction ATP + H2O + 4 H(+)(in) = ADP + phosphate + 5 H(+)(out). Produces ATP from ADP in the presence of a proton gradient across the membrane. The catalytic sites are hosted primarily by the beta subunits. The sequence is that of ATP synthase subunit beta from Idiomarina loihiensis (strain ATCC BAA-735 / DSM 15497 / L2-TR).